The sequence spans 213 residues: Sclerostin (213 aa).

The signal sequence occupies residues 1 to 28 (MQLSLAPCLACLLVHAAFVAVESQGWQA). N53 is a glycosylation site (N-linked (GlcNAc...) asparagine). Disulfide bonds link C80–C134, C94–C148, C105–C165, and C109–C167. A CTCK domain is found at 82-172 (ELHYTRFVTD…ASCKCKRLTR (91 aa)). N175 is a glycosylation site (N-linked (GlcNAc...) asparagine). A disordered region spans residues 178–213 (ELKDFGPETARPQKGRKPRPRARGAKANQAELENAY). Residues 190-201 (QKGRKPRPRARG) are compositionally biased toward basic residues.

It belongs to the sclerostin family. In terms of assembly, interacts with LRP4 (via the extracellular domain); the interaction facilitates the inhibition of Wnt signaling. Interacts with LRP5 (via the first two YWTD-EGF repeat domains); the interaction inhibits Wnt-mediated signaling. Interacts with LRP6.

It is found in the secreted. Negative regulator of bone growth that acts through inhibition of Wnt signaling and bone formation. This is Sclerostin from Rattus norvegicus (Rat).